We begin with the raw amino-acid sequence, 279 residues long: Pantothenate synthetase (279 aa).

26-33 (MGALHSGH) contacts ATP. Catalysis depends on H33, which acts as the Proton donor. Q57 serves as a coordination point for (R)-pantoate. Q57 provides a ligand contact to beta-alanine. 147-150 (GQKD) provides a ligand contact to ATP. Q153 lines the (R)-pantoate pocket. Residues I176 and 184 to 187 (ESSR) each bind ATP.

This sequence belongs to the pantothenate synthetase family. As to quaternary structure, homodimer.

It localises to the cytoplasm. It catalyses the reaction (R)-pantoate + beta-alanine + ATP = (R)-pantothenate + AMP + diphosphate + H(+). It participates in cofactor biosynthesis; (R)-pantothenate biosynthesis; (R)-pantothenate from (R)-pantoate and beta-alanine: step 1/1. In terms of biological role, catalyzes the condensation of pantoate with beta-alanine in an ATP-dependent reaction via a pantoyl-adenylate intermediate. In Corynebacterium glutamicum (strain R), this protein is Pantothenate synthetase.